A 200-amino-acid chain; its full sequence is Adenylyl-sulfate kinase (200 aa).

36-43 (GLSGSGKS) is an ATP binding site. S110 functions as the Phosphoserine intermediate in the catalytic mechanism.

This sequence belongs to the APS kinase family.

The catalysed reaction is adenosine 5'-phosphosulfate + ATP = 3'-phosphoadenylyl sulfate + ADP + H(+). The protein operates within sulfur metabolism; hydrogen sulfide biosynthesis; sulfite from sulfate: step 2/3. Functionally, catalyzes the synthesis of activated sulfate. This chain is Adenylyl-sulfate kinase, found in Clostridium acetobutylicum (strain ATCC 824 / DSM 792 / JCM 1419 / IAM 19013 / LMG 5710 / NBRC 13948 / NRRL B-527 / VKM B-1787 / 2291 / W).